A 310-amino-acid chain; its full sequence is tRNA dimethylallyltransferase (310 aa).

13–20 (GPTASGKT) serves as a coordination point for ATP. 15–20 (TASGKT) contributes to the substrate binding site. Interaction with substrate tRNA stretches follow at residues 38–41 (DSAL), 162–166 (QRLSR), 243–248 (RCVGYR), and 276–283 (KRQITWLR).

This sequence belongs to the IPP transferase family. In terms of assembly, monomer. Requires Mg(2+) as cofactor.

It catalyses the reaction adenosine(37) in tRNA + dimethylallyl diphosphate = N(6)-dimethylallyladenosine(37) in tRNA + diphosphate. In terms of biological role, catalyzes the transfer of a dimethylallyl group onto the adenine at position 37 in tRNAs that read codons beginning with uridine, leading to the formation of N6-(dimethylallyl)adenosine (i(6)A). This is tRNA dimethylallyltransferase from Aliivibrio fischeri (strain MJ11) (Vibrio fischeri).